Here is a 913-residue protein sequence, read N- to C-terminus: SUN domain-containing protein 1 (913 aa).

The LMNA-binding stretch occupies residues 1-139 (MDFSRLHTYT…VLRHPVLDES (139 aa)). Residues 1-415 (MDFSRLHTYT…LTRCLRNICK (415 aa)) are Nuclear-facing. Phosphoserine is present on residues S48 and S66. Residues 69–81 (SQAIDSHISTSRA) show a composition bias toward polar residues. Positions 69-120 (SQAIDSHISTSRATPAKGRETRTVKQRRSASKPAFSINHLSGKGLSSSTSHD) are disordered. The span at 108-120 (LSGKGLSSSTSHD) shows a compositional bias: low complexity. Residue S139 is modified to Phosphoserine. Positions 209-302 (SRVYSRDRTL…MTAGELSRVD (94 aa)) are SYNE2-binding. An EMD-binding region spans residues 223–302 (VSFYLDRTLW…MTAGELSRVD (80 aa)). Residues 416–436 (VFVLLLPLLLLLGAGVSLWGQ) traverse the membrane as a helical segment. At 437–913 (GNFFSLLPVL…RFRVHGEPIQ (477 aa)) the chain is on the perinuclear space side. Residues 456–485 (RVDDSKGMHRPGPLPPSPPPKVDHKASQWP) form a disordered region. Coiled coils occupy residues 491–533 (GQKV…EGLS) and 563–638 (HHDH…CEQA). The segment at 703–913 (TSEAIVSAVN…RFRVHGEPIQ (211 aa)) is sufficient for interaction with SYNE1 and SYNE2. One can recognise an SUN domain in the interval 751–912 (GGSILSTRCS…YRFRVHGEPI (162 aa)).

Core component of the LINC complex which is composed of inner nuclear membrane SUN domain-containing proteins coupled to outer nuclear membrane KASH domain-containing nesprins. SUN and KASH domain-containing proteins seem to bind each other promiscuously; however, differentially expression of LINC complex constituents is giving rise to specific assemblies. At least SUN1/2-containing core LINC complexes are proposed to be hexameric composed of three protomers of each KASH and SUN domain-containing protein. Interacts with KASH5 (via the last 22 amino acids); this interaction mediates KASH5 telomere localization by forming a SUN1:KASH5 LINC complex. Isoform 5 is proposed to form a non-nuclear spermatogenesis-specific LINC complex with SYNE3 during sperm head formation. Interacts with SYNE2 and SYNE1; probably forming respective LINC complexes. Interacts with A-type lamin with a strong preference for unprocessed A-type lamin compared with the mature protein. Interaction with lamins B1 and C is hardly detectable. Interacts with NAT10. Interacts with EMD and TSNAX. Associates with the nuclear pore complex (NPC). Interacts with CCDC79/TERB1; promoting the accumulation of the LINC complex complexes at the telomere-nuclear envelope attachment sites. Interacts with IRAG2. Interacts (via KASH domain) with TMEM258. Post-translationally, the disulfide bond with KASH domain-containing nesprins is required for stability of the respective LINC complexes under tensile forces. In terms of tissue distribution, widely expressed. Expressed in cochlear outer hair cells (at protein level). Seven isoforms are expressed in testis including testis-specific isoform 5. Isoform 5 is the only isoform expressed at the end of sperm differentiation. Six isoforms are expressed in muscle, heart and brain, four isoforms in kidney and three isoforms in liver.

Its subcellular location is the nucleus inner membrane. The protein localises to the cytoplasmic vesicle. It is found in the secretory vesicle. It localises to the acrosome outer membrane. In terms of biological role, as a component of the LINC (LInker of Nucleoskeleton and Cytoskeleton) complex involved in the connection between the nuclear lamina and the cytoskeleton. The nucleocytoplasmic interactions established by the LINC complex play an important role in the transmission of mechanical forces across the nuclear envelope and in nuclear movement and positioning. Required for interkinetic nuclear migration (INM) and essential for nucleokinesis and centrosome-nucleus coupling during radial neuronal migration in the cerebral cortex and during glial migration. Involved in telomere attachment to nuclear envelope in the prophase of meiosis implicating a SUN1/2:KASH5 LINC complex in which SUN1 and SUN2 seem to act at least partial redundantly. Required for gametogenesis and involved in selective gene expression of coding and non-coding RNAs needed for gametogenesis. Helps to define the distribution of nuclear pore complexes (NPCs). Required for efficient localization of SYNE4 in the nuclear envelope. May be involved in nuclear remodeling during sperm head formation in spermatogenesis. May play a role in DNA repair by suppressing non-homologous end joining repair to facilitate the repair of DNA cross-links. Isoform 5 may be involved in nuclear remodeling during sperm head formation in spermatogenesis. A probable SUN1 isoform 5:SYNE3 LINC complex may tether spermatid nuclei to anterior cytoskeletal structures such as actin filaments present at membraneous junctions of spermatids and Sertoli cells. This is SUN domain-containing protein 1 from Mus musculus (Mouse).